We begin with the raw amino-acid sequence, 902 residues long: Gamma-tubulin complex component 2 (902 aa).

At Tyr-83 the chain carries Phosphotyrosine. The segment at 874-902 (AERSQKATPQVPVLRGPPAPAPRVAVTAQ) is disordered.

Belongs to the TUBGCP family. Component of the gamma-tubulin ring complex (gTuRC) consisting of TUBGCP2, TUBGCP3, TUBGCP4, TUBGCP5 and TUBGCP6 and gamma-tubulin TUBG1 or TUBG2. TUBGCP2, TUBGCP3, TUBGCP4, TUBGCP5 and TUBGCP6 assemble in a 5:5:2:1:1 stoichiometry; each is associated with a gamma-tubulin, thereby arranging 14 gamma-tubulins in a helical manner. Gamma-tubulin at the first position is blocked by TUBGCP3 at the last position, allowing 13 protafilaments to grow into a microtubule. The gTuRC (via TUBGCP3 and TUBGCP6) interacts with ACTB and MZT1; the interactions form a luminal bridge that stabilizes the initial structure during complex assembly. The gTuRC (via TUBGCP2) interacts with MZT2A/MZT2B and CDK5RAP2 (via CM1 motif); the interactions play a role in gTuRC activation. Interacts with ATF5; the ATF5:PCNT:polyglutamylated tubulin (PGT) tripartite unites the mother centriole and the pericentriolar material (PCM) in the centrosome. In terms of tissue distribution, ubiquitously expressed.

The protein localises to the cytoplasm. It is found in the cytoskeleton. The protein resides in the microtubule organizing center. Its subcellular location is the centrosome. Component of the gamma-tubulin ring complex (gTuRC) which mediates microtubule nucleation. The gTuRC regulates the minus-end nucleation of alpha-beta tubulin heterodimers that grow into microtubule protafilaments, a critical step in centrosome duplication and spindle formation. Plays a role in neuronal migration. The polypeptide is Gamma-tubulin complex component 2 (TUBGCP2) (Homo sapiens (Human)).